A 495-amino-acid polypeptide reads, in one-letter code: N-succinylglutamate 5-semialdehyde dehydrogenase (495 aa).

Residue 228-233 participates in NAD(+) binding; sequence GSYATG. Active-site residues include Glu251 and Cys285.

The protein belongs to the aldehyde dehydrogenase family. AstD subfamily.

It catalyses the reaction N-succinyl-L-glutamate 5-semialdehyde + NAD(+) + H2O = N-succinyl-L-glutamate + NADH + 2 H(+). It functions in the pathway amino-acid degradation; L-arginine degradation via AST pathway; L-glutamate and succinate from L-arginine: step 4/5. In terms of biological role, catalyzes the NAD-dependent reduction of succinylglutamate semialdehyde into succinylglutamate. This is N-succinylglutamate 5-semialdehyde dehydrogenase from Legionella pneumophila (strain Paris).